The sequence spans 728 residues: Homoaconitase, mitochondrial (728 aa).

The N-terminal 24 residues, 1 to 24 (MVAIPRLARLSVPAWALSARGRFY), are a transit peptide targeting the mitochondrion. [4Fe-4S] cluster contacts are provided by Cys362, Cys422, and Cys425.

The protein belongs to the aconitase/IPM isomerase family. It depends on [4Fe-4S] cluster as a cofactor.

It is found in the mitochondrion. It carries out the reaction (2R,3S)-homoisocitrate = cis-homoaconitate + H2O. It functions in the pathway amino-acid biosynthesis; L-lysine biosynthesis via AAA pathway; L-alpha-aminoadipate from 2-oxoglutarate: step 3/5. Its function is as follows. Catalyzes the reversible hydration of cis-homoaconitate to (2R,3S)-homoisocitrate, a step in the alpha-aminoadipate pathway for lysine biosynthesis. The polypeptide is Homoaconitase, mitochondrial (LYS4) (Cryptococcus neoformans var. neoformans serotype D (strain JEC21 / ATCC MYA-565) (Filobasidiella neoformans)).